Here is a 222-residue protein sequence, read N- to C-terminus: Physcion biosynthesis cluster O-methyltransferase (222 aa).

Belongs to the methyltransferase superfamily.

It catalyses the reaction emodin + S-adenosyl-L-methionine = physcion + S-adenosyl-L-homocysteine. Its pathway is secondary metabolite biosynthesis. O-methyltransferase; part of the gene cluster that mediates the biosynthesis of physcion, a natural anthraquinone fungicide that can prevent plant fungal infections. Within the pathway, the O-methyltransferase AcOMT catalyzes the last step by transferring a methyl group to C-6 hydroxyl of emodin to form physcion. AcOMT may also methylate the C-6 hydroxyl group of emodin anthrone to produce physcion-anthrone B. The pathway begins with the polyketide synthase AcPKS that condenses 8 malonyl-CoA units to synthesize atrochrysone thioester which is released from the synthase by the atrochrysone carboxyl ACP thioesterase AcTE that breaks the thioester bond and leads to free atrochrysone carboxylic acid. Spontaneous decarboxylation of atrochrysone carboxylic acid leads to the formation of atrochrysone. Then, atrochrysone undergoes spontaneous dehydration and oxidation, giving the products emodin anthrone and emodin. The O-methyltransferase AcOMT then methylates the C-6 hydroxyl of emodin to form physcion. The sequence is that of Physcion biosynthesis cluster O-methyltransferase from Aspergillus chevalieri (Eurotium chevalieri).